Reading from the N-terminus, the 92-residue chain is Acylphosphatase (92 aa).

The region spanning 5–92 (RVKVKVNGRV…GVFERFEVRF (88 aa)) is the Acylphosphatase-like domain. Catalysis depends on residues Arg20 and Asn38.

The protein belongs to the acylphosphatase family.

The enzyme catalyses an acyl phosphate + H2O = a carboxylate + phosphate + H(+). In Syntrophotalea carbinolica (strain DSM 2380 / NBRC 103641 / GraBd1) (Pelobacter carbinolicus), this protein is Acylphosphatase (acyP).